The sequence spans 581 residues: Arginine--tRNA ligase (581 aa).

Residues 131–141 carry the 'HIGH' region motif; it reads ANPTGPMHVGH.

The protein belongs to the class-I aminoacyl-tRNA synthetase family. As to quaternary structure, monomer.

It is found in the cytoplasm. The catalysed reaction is tRNA(Arg) + L-arginine + ATP = L-arginyl-tRNA(Arg) + AMP + diphosphate. This Paracoccus denitrificans (strain Pd 1222) protein is Arginine--tRNA ligase.